Consider the following 564-residue polypeptide: Threonine--tRNA ligase (564 aa).

Residues 167-464 are catalytic; sequence DHRSLGKQLE…LLEKTSGNFP (298 aa). C260, H311, and H441 together coordinate Zn(2+).

This sequence belongs to the class-II aminoacyl-tRNA synthetase family. As to quaternary structure, homodimer. The cofactor is Zn(2+).

It localises to the cytoplasm. It carries out the reaction tRNA(Thr) + L-threonine + ATP = L-threonyl-tRNA(Thr) + AMP + diphosphate + H(+). In terms of biological role, catalyzes the attachment of threonine to tRNA(Thr) in a two-step reaction: L-threonine is first activated by ATP to form Thr-AMP and then transferred to the acceptor end of tRNA(Thr). Also edits incorrectly charged L-seryl-tRNA(Thr). The protein is Threonine--tRNA ligase of Mycoplasma genitalium (strain ATCC 33530 / DSM 19775 / NCTC 10195 / G37) (Mycoplasmoides genitalium).